A 146-amino-acid polypeptide reads, in one-letter code: Villin-like protein ABP41 (146 aa).

It belongs to the villin/gelsolin family. Binds to actin. As to expression, expressed in pollen (at protein level).

Its subcellular location is the cytoplasm. It is found in the cytoskeleton. Its function is as follows. Ca(2+)-dependent actin filament-severing protein that is required for pollen tube growth. Probably regulates the dynamics of the actin cytoskeleton. It can promote the assembly of monomers into filaments (nucleation) as well as sever filaments already formed. This is Villin-like protein ABP41 from Lilium davidii (David's lily).